The chain runs to 644 residues: 3D-(3,5/4)-trihydroxycyclohexane-1,2-dione hydrolase 1 (644 aa).

Residue Glu-65 coordinates thiamine diphosphate. The tract at residues 442 to 522 (SLPGDLQRMW…INVLLFDNSG (81 aa)) is thiamine pyrophosphate binding. The Mg(2+) site is built by Asp-493 and Asn-520.

This sequence belongs to the TPP enzyme family. Requires Mg(2+) as cofactor. Thiamine diphosphate serves as cofactor.

The enzyme catalyses 3D-3,5/4-trihydroxycyclohexane-1,2-dione + H2O = 5-deoxy-D-glucuronate + H(+). It participates in polyol metabolism; myo-inositol degradation into acetyl-CoA; acetyl-CoA from myo-inositol: step 3/7. Functionally, involved in the cleavage of the C1-C2 bond of 3D-(3,5/4)-trihydroxycyclohexane-1,2-dione (THcHDO) to yield 5-deoxy-glucuronate (5DG). The chain is 3D-(3,5/4)-trihydroxycyclohexane-1,2-dione hydrolase 1 from Bacillus cereus (strain ZK / E33L).